Consider the following 381-residue polypeptide: MGRKRVVVLGAGGSIGKNSLEIIRRFPDRFELAGFSVHSNSGFAKTLLAEFTDAQFVSTKKKNSNLKHEIDEEAVRRLIEKSKADIVINGIAGSAGLKASVEVIKSGLDLALANKETIVEAGELIFQDAEKSGSTIIPVDSEHAAIFQLINAHKKGNIEKIIITASGGPFLNTPREKLSTIKLEDALKHPTWKMGGKISIDSASLANKALEVIEAVKLFSFPPEKIEVTVHPQSIIHSMVQCKNGEIFAQASPPDMKNPILNALSFPKMPESFLKPLDFSQIIKLEFMPPRTDDFPMLALGFEAAGKGGAYPIAFNVANEEAVDAFIKGKIGFTDLADITQEVLNSDWTMKPSSYEEVYDYENRARAIALARILDRVNGLQ.

The NADPH site is built by Gly-13, Ser-14, Ile-15, Asn-40, and Asn-114. Lys-115 provides a ligand contact to 1-deoxy-D-xylulose 5-phosphate. Glu-116 provides a ligand contact to NADPH. Residue Asp-140 coordinates Mn(2+). Residues Ser-141, Glu-142, Ser-166, and His-189 each coordinate 1-deoxy-D-xylulose 5-phosphate. Glu-142 contributes to the Mn(2+) binding site. NADPH is bound at residue Gly-195. Residues Ser-202, Asn-207, Lys-208, and Glu-211 each coordinate 1-deoxy-D-xylulose 5-phosphate. Glu-211 is a binding site for Mn(2+).

It belongs to the DXR family. Mg(2+) is required as a cofactor. The cofactor is Mn(2+).

The catalysed reaction is 2-C-methyl-D-erythritol 4-phosphate + NADP(+) = 1-deoxy-D-xylulose 5-phosphate + NADPH + H(+). It functions in the pathway isoprenoid biosynthesis; isopentenyl diphosphate biosynthesis via DXP pathway; isopentenyl diphosphate from 1-deoxy-D-xylulose 5-phosphate: step 1/6. Its function is as follows. Catalyzes the NADPH-dependent rearrangement and reduction of 1-deoxy-D-xylulose-5-phosphate (DXP) to 2-C-methyl-D-erythritol 4-phosphate (MEP). This chain is 1-deoxy-D-xylulose 5-phosphate reductoisomerase, found in Treponema denticola (strain ATCC 35405 / DSM 14222 / CIP 103919 / JCM 8153 / KCTC 15104).